We begin with the raw amino-acid sequence, 125 residues long: Small ribosomal subunit protein uS13 (125 aa).

The segment at 91–125 is disordered; that stretch reads HRRSLPVRGQNTQTNARTRKGKRKTVAGKKKAARK. A compositionally biased stretch (basic residues) spans 107–125; sequence RTRKGKRKTVAGKKKAARK.

The protein belongs to the universal ribosomal protein uS13 family. As to quaternary structure, part of the 30S ribosomal subunit. Forms a loose heterodimer with protein S19. Forms two bridges to the 50S subunit in the 70S ribosome.

Its function is as follows. Located at the top of the head of the 30S subunit, it contacts several helices of the 16S rRNA. In the 70S ribosome it contacts the 23S rRNA (bridge B1a) and protein L5 of the 50S subunit (bridge B1b), connecting the 2 subunits; these bridges are implicated in subunit movement. Contacts the tRNAs in the A and P-sites. The sequence is that of Small ribosomal subunit protein uS13 from Chlorobium phaeovibrioides (strain DSM 265 / 1930) (Prosthecochloris vibrioformis (strain DSM 265)).